The following is a 300-amino-acid chain: Ribosomal RNA small subunit methyltransferase H (300 aa).

S-adenosyl-L-methionine is bound by residues 35–37 (GGH), Asp55, Phe82, Asp100, and Gln107.

Belongs to the methyltransferase superfamily. RsmH family.

The protein localises to the cytoplasm. The catalysed reaction is cytidine(1402) in 16S rRNA + S-adenosyl-L-methionine = N(4)-methylcytidine(1402) in 16S rRNA + S-adenosyl-L-homocysteine + H(+). Specifically methylates the N4 position of cytidine in position 1402 (C1402) of 16S rRNA. The polypeptide is Ribosomal RNA small subunit methyltransferase H (Chlamydia trachomatis serovar L2 (strain ATCC VR-902B / DSM 19102 / 434/Bu)).